A 316-amino-acid chain; its full sequence is SHC-transforming protein homolog 1 (316 aa).

One can recognise a PID domain in the interval G16–N158. Positions W211–V307 constitute an SH2 domain. Residues S292–E316 are disordered.

In terms of assembly, interacts (via PID domain) with daf-2 (via cytoplasmic domain). Interacts with mek-1; the interaction is independent of mek-1 catalytic activity and is constitutive. Interacts (via N-terminus) with mlk-1 (via NPQY motif when phosphorylated on tyrosine residue). Does not interact with jkk-1 or sek-1. Interacts (via SH2 domain) with svh-2. Interacts with svh-4. Expressed in hypodermis, intestine, head and tail neurons, pharynx, gonads, vulva and body muscles.

The protein resides in the cytoplasm. It is found in the nucleus. The protein localises to the cell membrane. Functionally, scaffold protein which plays an important role in the activation of the JNK pathway composed of mlk-1, mek-1 and kgb-1; by bringing together mek-1 and mlk-1, promotes mlk-1-mediated phosphorylation and activation of mek-1 which in turn phosphorylates kgb-1. In addition, negatively modulates the activation of the insulin/IGF-1-like signaling (IIS) probably by inhibiting the insulin receptor daf-2. Positively regulates the activity of the transcription factor daf-16/FOXO by both inhibiting IIS and activating the JNK pathway. Plays a role in maintaining gonadal basement membrane integrity through activation of the JNK pathway components mek-1 and jnk-1. Involved in the response to several environmental stresses including heavy metal ions (Cu(2+) and Cd(2+)), heat, oxidative and protein misfolding (ER) stresses. Plays a role in gonad and germline development following the L1 diapause. Plays a role in life span and egg laying. Plays a role in axon regeneration after injury. The chain is SHC-transforming protein homolog 1 from Caenorhabditis elegans.